Here is a 415-residue protein sequence, read N- to C-terminus: Sphingomyelin synthase-related protein 1 (415 aa).

The SAM domain maps to 12–78 (WTTKHVAVWL…MLSVRKLQKI (67 aa)). The next 4 membrane-spanning stretches (helical) occupy residues 153–173 (ILSC…MVIV), 201–221 (FAMT…VLLL), 232–252 (LCSL…VTSL), and 277–297 (FAIW…GDYM). The active site involves His-301. A helical membrane pass occupies residues 322 to 342 (FLHTLSWVLNLFGIFFILAAH). Catalysis depends on residues His-344 and Asp-348. A helical transmembrane segment spans residues 347–367 (IDVFIAFYITTRLFLYYHTLA). Topologically, residues 368-415 (NTRAYQQSRRARIWFPMFSFFECNVNGTVPNEYCWPFSKPAIMKRLIG) are cytoplasmic.

The protein belongs to the sphingomyelin synthase family.

The protein localises to the endoplasmic reticulum membrane. It carries out the reaction an N-acylsphing-4-enine + a 1,2-diacyl-sn-glycero-3-phosphoethanolamine = an N-acylsphing-4-enine 1-phosphoethanolamine + a 1,2-diacyl-sn-glycerol. The catalysed reaction is an N-acylsphinganine + a 1,2-diacyl-sn-glycero-3-phosphoethanolamine = an N-acylsphinganine-1-phosphoethanolamine + a 1,2-diacyl-sn-glycerol. It catalyses the reaction an N-acyl-(4R)-4-hydroxysphinganine + a 1,2-diacyl-sn-glycero-3-phosphoethanolamine = an N-acyl-(4R)-4-hydroxysphinganine-1-phosphoethanolamine + a 1,2-diacyl-sn-glycerol. The enzyme catalyses N-hexadecanoylsphinganine + a 1,2-diacyl-sn-glycero-3-phosphoethanolamine = N-hexadecanoyl-sphinganine-1-phosphoethanolamine + a 1,2-diacyl-sn-glycerol. It carries out the reaction N-hexadecanoyl-(4R)-hydroxysphinganine + a 1,2-diacyl-sn-glycero-3-phosphoethanolamine = N-hexadecanoyl-(4R)-hydroxysphinganine-1-phosphoethanolamine + a 1,2-diacyl-sn-glycerol. It participates in sphingolipid metabolism. Synthesizes sphingolipids through transfer of a phosphatidyl head group from a glycerophospholipid on to the primary hydroxyl of a ceramide in the lumen of the endoplasmic reticulum. Catalyzes the synthesis of ceramide phosphoethanolamines (CPEs) (such as N-acylsphing-4-enine 1-phosphoethanolamine) by transferring phosphoethanolamine head group, which is smaller and more hydrophilic than the phosphocholine (PC) headgroup transferred in the canonical sphingomyelin synthesis (SMS) reaction by SMS1 or SMS2, from a phosphatidylethanolamine (1,2-diacyl-sn-glycero-3-phosphoethanolamine, PE) to a ceramide (such as N-acylsphing-4-enine). The larger PC prevents an efficient fit in the enzyme's catalytic pocket, leading to little or no SMS activity. In vitro, in the absence of ceramide, it has PLC activity with preference for phosphatidylinositol and phosphatidic acid, but also hydrolyzes phosphatidylethanolamine. The polypeptide is Sphingomyelin synthase-related protein 1 (Homo sapiens (Human)).